Here is a 72-residue protein sequence, read N- to C-terminus: Translation initiation factor IF-1 (72 aa).

The S1-like domain occupies 1–72 (MAKEDVIEFS…TKGRITFRYK (72 aa)).

This sequence belongs to the IF-1 family. In terms of assembly, component of the 30S ribosomal translation pre-initiation complex which assembles on the 30S ribosome in the order IF-2 and IF-3, IF-1 and N-formylmethionyl-tRNA(fMet); mRNA recruitment can occur at any time during PIC assembly.

It localises to the cytoplasm. One of the essential components for the initiation of protein synthesis. Stabilizes the binding of IF-2 and IF-3 on the 30S subunit to which N-formylmethionyl-tRNA(fMet) subsequently binds. Helps modulate mRNA selection, yielding the 30S pre-initiation complex (PIC). Upon addition of the 50S ribosomal subunit IF-1, IF-2 and IF-3 are released leaving the mature 70S translation initiation complex. This is Translation initiation factor IF-1 from Paramagnetospirillum magneticum (strain ATCC 700264 / AMB-1) (Magnetospirillum magneticum).